The primary structure comprises 229 residues: UPF0758 protein Mbar_A2303 (229 aa).

One can recognise an MPN domain in the interval 106–228 (KVCSPKDVYT…YVSLKDEGFV (123 aa)). Zn(2+) contacts are provided by H177, H179, and D190. A JAMM motif motif is present at residues 177-190 (HNHPSGDPSPSRED).

Belongs to the UPF0758 family.

The polypeptide is UPF0758 protein Mbar_A2303 (Methanosarcina barkeri (strain Fusaro / DSM 804)).